The following is a 288-amino-acid chain: Thymidylate synthase (288 aa).

Arginine 21 is a binding site for dUMP. Asparagine 51 is a binding site for (6R)-5,10-methylene-5,6,7,8-tetrahydrofolate. 150-151 serves as a coordination point for dUMP; that stretch reads RR. Cysteine 170 acts as the Nucleophile in catalysis. DUMP is bound by residues 190-193, asparagine 201, and 231-233; these read RSGD and HIY. (6R)-5,10-methylene-5,6,7,8-tetrahydrofolate is bound at residue aspartate 193. Residue alanine 287 participates in (6R)-5,10-methylene-5,6,7,8-tetrahydrofolate binding.

It belongs to the thymidylate synthase family. Bacterial-type ThyA subfamily. In terms of assembly, homodimer.

Its subcellular location is the cytoplasm. The enzyme catalyses dUMP + (6R)-5,10-methylene-5,6,7,8-tetrahydrofolate = 7,8-dihydrofolate + dTMP. The protein operates within pyrimidine metabolism; dTTP biosynthesis. Functionally, catalyzes the reductive methylation of 2'-deoxyuridine-5'-monophosphate (dUMP) to 2'-deoxythymidine-5'-monophosphate (dTMP) while utilizing 5,10-methylenetetrahydrofolate (mTHF) as the methyl donor and reductant in the reaction, yielding dihydrofolate (DHF) as a by-product. This enzymatic reaction provides an intracellular de novo source of dTMP, an essential precursor for DNA biosynthesis. The polypeptide is Thymidylate synthase (Aster yellows witches'-broom phytoplasma (strain AYWB)).